The following is a 201-amino-acid chain: Holliday junction branch migration complex subunit RuvA (201 aa).

Positions 1–64 are domain I; sequence MYEYIRGQFQ…EDFIGLYGFT (64 aa). Residues 65–143 are domain II; it reads TREELEMFKL…PDELTSEEGQ (79 aa). A flexible linker region spans residues 144 to 152; the sequence is LIEGINDNS. Residues 153–201 are domain III; the sequence is DYSFNINETLSALMALGYTEKEAQKALEKVDKTLSIENMIKESLKLLMR.

This sequence belongs to the RuvA family. In terms of assembly, homotetramer. Forms an RuvA(8)-RuvB(12)-Holliday junction (HJ) complex. HJ DNA is sandwiched between 2 RuvA tetramers; dsDNA enters through RuvA and exits via RuvB. An RuvB hexamer assembles on each DNA strand where it exits the tetramer. Each RuvB hexamer is contacted by two RuvA subunits (via domain III) on 2 adjacent RuvB subunits; this complex drives branch migration. In the full resolvosome a probable DNA-RuvA(4)-RuvB(12)-RuvC(2) complex forms which resolves the HJ.

The protein resides in the cytoplasm. The RuvA-RuvB-RuvC complex processes Holliday junction (HJ) DNA during genetic recombination and DNA repair, while the RuvA-RuvB complex plays an important role in the rescue of blocked DNA replication forks via replication fork reversal (RFR). RuvA specifically binds to HJ cruciform DNA, conferring on it an open structure. The RuvB hexamer acts as an ATP-dependent pump, pulling dsDNA into and through the RuvAB complex. HJ branch migration allows RuvC to scan DNA until it finds its consensus sequence, where it cleaves and resolves the cruciform DNA. In Clostridium perfringens (strain 13 / Type A), this protein is Holliday junction branch migration complex subunit RuvA.